Reading from the N-terminus, the 365-residue chain is S-adenosylmethionine:tRNA ribosyltransferase-isomerase (365 aa).

This sequence belongs to the QueA family. Monomer.

Its subcellular location is the cytoplasm. It carries out the reaction 7-aminomethyl-7-carbaguanosine(34) in tRNA + S-adenosyl-L-methionine = epoxyqueuosine(34) in tRNA + adenine + L-methionine + 2 H(+). Its pathway is tRNA modification; tRNA-queuosine biosynthesis. Transfers and isomerizes the ribose moiety from AdoMet to the 7-aminomethyl group of 7-deazaguanine (preQ1-tRNA) to give epoxyqueuosine (oQ-tRNA). This chain is S-adenosylmethionine:tRNA ribosyltransferase-isomerase, found in Prochlorococcus marinus (strain NATL2A).